We begin with the raw amino-acid sequence, 174 residues long: Methylated-DNA--protein-cysteine methyltransferase (174 aa).

Residue C141 is the Nucleophile; methyl group acceptor of the active site.

It belongs to the MGMT family.

The protein localises to the cytoplasm. It catalyses the reaction a 6-O-methyl-2'-deoxyguanosine in DNA + L-cysteinyl-[protein] = S-methyl-L-cysteinyl-[protein] + a 2'-deoxyguanosine in DNA. The enzyme catalyses a 4-O-methyl-thymidine in DNA + L-cysteinyl-[protein] = a thymidine in DNA + S-methyl-L-cysteinyl-[protein]. Involved in the cellular defense against the biological effects of O6-methylguanine (O6-MeG) and O4-methylthymine (O4-MeT) in DNA. Repairs the methylated nucleobase in DNA by stoichiometrically transferring the methyl group to a cysteine residue in the enzyme. This is a suicide reaction: the enzyme is irreversibly inactivated. The protein is Methylated-DNA--protein-cysteine methyltransferase of Thermococcus gammatolerans (strain DSM 15229 / JCM 11827 / EJ3).